An 883-amino-acid chain; its full sequence is uncharacterized protein (883 aa).

A disordered region spans residues 258-373; sequence INNQSDNQSN…NQFNKPDNEP (116 aa). Composition is skewed to low complexity over residues 259 to 268, 277 to 317, and 324 to 333; these read NNQSDNQSNS, EPNG…SNSE, and NEPNTEPNTE. A compositionally biased stretch (polar residues) spans 334 to 347; it reads SNGQSNSELNNQSD. Residues 348-368 show a composition bias toward low complexity; that stretch reads NHPNNEPNSEPNNEPNNQFNK.

It belongs to the mimivirus L137 family.

This is an uncharacterized protein from Acanthamoeba polyphaga mimivirus (APMV).